The chain runs to 290 residues: Probable aquaporin PIP2-7 (290 aa).

2 consecutive transmembrane segments (helical) span residues 45-65 and 79-99; these read ALIA…ATVI and GVGY…LVYC. Positions 109–111 match the NPA 1 motif; it reads NPA. The next 3 membrane-spanning stretches (helical) occupy residues 128–148, 168–188, and 202–222; these read VLYV…VKGI, SAAG…YTVF, and IPVL…LATI. Positions 230–232 match the NPA 2 motif; it reads NPA. A helical transmembrane segment spans residues 252-272; it reads IFWVGPVIGAFLAAAYHKLVL.

This sequence belongs to the MIP/aquaporin (TC 1.A.8) family. PIP (TC 1.A.8.11) subfamily. Expressed in roots.

It is found in the cell membrane. Its function is as follows. Aquaporins facilitate the transport of water and small neutral solutes across cell membranes. This is Probable aquaporin PIP2-7 (PIP2-7) from Oryza sativa subsp. japonica (Rice).